The following is a 296-amino-acid chain: Small ribosomal subunit protein uS2 (296 aa).

Residues 252-296 (TSSKTVSKLKQSKKLSKTQNIDEETNTEFDQALGGACENNNSDNT) are disordered.

Belongs to the universal ribosomal protein uS2 family.

The polypeptide is Small ribosomal subunit protein uS2 (rpsB) (Rickettsia prowazekii (strain Madrid E)).